The sequence spans 185 residues: Ribosome-recycling factor (185 aa).

Belongs to the RRF family.

The protein resides in the cytoplasm. Functionally, responsible for the release of ribosomes from messenger RNA at the termination of protein biosynthesis. May increase the efficiency of translation by recycling ribosomes from one round of translation to another. The protein is Ribosome-recycling factor of Nitrosomonas europaea (strain ATCC 19718 / CIP 103999 / KCTC 2705 / NBRC 14298).